Reading from the N-terminus, the 352-residue chain is Cyclin-dependent kinase-like 1 (352 aa).

The region spanning 4-287 (YEKIGKIGEG…CEQLLQHPYF (284 aa)) is the Protein kinase domain. ATP is bound by residues 10-18 (IGEGSYGVV) and lysine 33. The [NKR]KIAxRE motif lies at 45 to 51 (KKIALRE). Aspartate 126 acts as the Proton acceptor in catalysis.

Belongs to the protein kinase superfamily. CMGC Ser/Thr protein kinase family. CDC2/CDKX subfamily.

Its subcellular location is the cytoplasm. The protein resides in the nucleus. It catalyses the reaction L-seryl-[protein] + ATP = O-phospho-L-seryl-[protein] + ADP + H(+). The enzyme catalyses L-threonyl-[protein] + ATP = O-phospho-L-threonyl-[protein] + ADP + H(+). The protein is Cyclin-dependent kinase-like 1 of Mus musculus (Mouse).